We begin with the raw amino-acid sequence, 159 residues long: Peptide methionine sulfoxide reductase MsrB (159 aa).

The region spanning 22-144 (RERLEANLTA…NSVSLQFVKA (123 aa)) is the MsrB domain. Residues cysteine 61, cysteine 64, cysteine 110, and cysteine 113 each contribute to the Zn(2+) site. The active-site Nucleophile is cysteine 133.

It belongs to the MsrB Met sulfoxide reductase family. It depends on Zn(2+) as a cofactor.

The catalysed reaction is L-methionyl-[protein] + [thioredoxin]-disulfide + H2O = L-methionyl-(R)-S-oxide-[protein] + [thioredoxin]-dithiol. This chain is Peptide methionine sulfoxide reductase MsrB, found in Caulobacter vibrioides (strain ATCC 19089 / CIP 103742 / CB 15) (Caulobacter crescentus).